A 195-amino-acid polypeptide reads, in one-letter code: Ubiquitin-conjugating enzyme E2 T (195 aa).

The UBC core domain maps to 2–152 (QRTSRLKREL…ARQWTEKHAR (151 aa)). Residue C86 is the Glycyl thioester intermediate of the active site. Residue K91 forms a Glycyl lysine isopeptide (Lys-Gly) (interchain with G-Cter in ubiquitin) linkage. The segment covering 146-157 (WTEKHARQKTDE) has biased composition (basic and acidic residues). Residues 146 to 195 (WTEKHARQKTDEEGMPGSLPEVGGSEGPSAAQKRKAGQLSSGGKRFCPDV) are disordered. Residue K180 forms a Glycyl lysine isopeptide (Lys-Gly) (interchain with G-Cter in ubiquitin) linkage. K189 participates in a covalent cross-link: Glycyl lysine isopeptide (Lys-Gly) (interchain with G-Cter in SUMO2).

It belongs to the ubiquitin-conjugating enzyme family. In terms of assembly, interacts with FANCL and BRCA1. In terms of processing, auto-ubiquitinated. Effects of auto-monoubiquitination at Lys-91 and Lys-180 are unclear.

It is found in the nucleus. The catalysed reaction is S-ubiquitinyl-[E1 ubiquitin-activating enzyme]-L-cysteine + [E2 ubiquitin-conjugating enzyme]-L-cysteine = [E1 ubiquitin-activating enzyme]-L-cysteine + S-ubiquitinyl-[E2 ubiquitin-conjugating enzyme]-L-cysteine.. The protein operates within protein modification; protein ubiquitination. In terms of biological role, accepts ubiquitin from the E1 complex and catalyzes its covalent attachment to other proteins. Catalyzes monoubiquitination. Involved in mitomycin-C (MMC)-induced DNA repair: acts as a specific E2 ubiquitin-conjugating enzyme for the Fanconi anemia complex by associating with E3 ubiquitin-protein ligase FANCL and catalyzing monoubiquitination of FANCD2, a key step in the DNA damage pathway. Also mediates monoubiquitination of FANCL and FANCI. May contribute to ubiquitination and degradation of BRCA1. In vitro able to promote polyubiquitination using all 7 ubiquitin Lys residues, but may prefer 'Lys-11'-, 'Lys-27'-, 'Lys-48'- and 'Lys-63'-linked polyubiquitination. This chain is Ubiquitin-conjugating enzyme E2 T (UBE2T), found in Bos taurus (Bovine).